A 243-amino-acid chain; its full sequence is Carboxy-S-adenosyl-L-methionine synthase (243 aa).

Residues Tyr-40, Gly-65–Ser-67, Asp-90–Asn-91, Asp-118–Ile-119, Asn-133, and Arg-200 contribute to the S-adenosyl-L-methionine site.

The protein belongs to the class I-like SAM-binding methyltransferase superfamily. Cx-SAM synthase family. Homodimer.

The enzyme catalyses prephenate + S-adenosyl-L-methionine = carboxy-S-adenosyl-L-methionine + 3-phenylpyruvate + H2O. Functionally, catalyzes the conversion of S-adenosyl-L-methionine (SAM) to carboxy-S-adenosyl-L-methionine (Cx-SAM). In Shewanella sediminis (strain HAW-EB3), this protein is Carboxy-S-adenosyl-L-methionine synthase.